The chain runs to 97 residues: Mapk-regulated corepressor-interacting protein 1 (97 aa).

Residues 1–30 (MTSSPVSRVVYNGKRTSSPRSPPSSSEIFT) are disordered. Residues serine 21 and serine 24 each carry the phosphoserine modification. The residue at position 30 (threonine 30) is a Phosphothreonine. At tyrosine 41 the chain carries Phosphotyrosine. At lysine 79 the chain carries N6-acetyllysine. The PXDLS motif motif lies at 80–84 (PIDLS).

It belongs to the MCRIP family. Interacts (unphosphorylated form, via the PXDLS motif) with CTBP1, competitively inhibiting CTBP-ZEB1 interaction. Interacts with CTBP2. Interacts with MCRIP2. Interacts with DDX6. Post-translationally, phosphorylation by MAPK3/1 (ERK1/2) regulates MCRIP1 binding to CTBP(s).

Its subcellular location is the nucleus. The protein resides in the cytoplasm. It localises to the stress granule. Functionally, the phosphorylation status of MCRIP1 functions as a molecular switch to regulate epithelial-mesenchymal transition. Unphosphorylated MCRIP1 binds to and inhibits the transcriptional corepressor CTBP(s). When phosphorylated by MAPK/ERK, MCRIP1 releases CTBP(s) resulting in transcriptional silencing of the E-cadherin gene and induction of epithelial-mesenchymal transition. The sequence is that of Mapk-regulated corepressor-interacting protein 1 from Homo sapiens (Human).